The sequence spans 118 residues: Small ribosomal subunit protein uS13 (118 aa).

The tract at residues 91-118 (HRHSLPVRGQRTKTNARTRKGPRKPIRK) is disordered.

This sequence belongs to the universal ribosomal protein uS13 family. Part of the 30S ribosomal subunit. Forms a loose heterodimer with protein S19. Forms two bridges to the 50S subunit in the 70S ribosome.

In terms of biological role, located at the top of the head of the 30S subunit, it contacts several helices of the 16S rRNA. In the 70S ribosome it contacts the 23S rRNA (bridge B1a) and protein L5 of the 50S subunit (bridge B1b), connecting the 2 subunits; these bridges are implicated in subunit movement. Contacts the tRNAs in the A and P-sites. This chain is Small ribosomal subunit protein uS13, found in Hahella chejuensis (strain KCTC 2396).